The chain runs to 301 residues: POU domain, class 6, transcription factor 1 (301 aa).

Repeat copies occupy residues 11-17 (NAQGQVI) and 50-56 (NAQGQVI). The segment at 11–56 (NAQGQVIGALPWVVNSASVATPAPAQSLQVQAVTPQLLLNAQGQVI) is 2 X 7 AA repeats of N-A-Q-G-Q-V-I. The interval 66–88 (QPVAVRKPSTPESPAKSEVQPIQ) is disordered. Positions 139–213 (EDGINLEEIR…VLEKWLNEAE (75 aa)) constitute a POU-specific domain. The segment at residues 234–293 (KRKRRTSFTPQAIEALNAYFEKNPLPTGQEITEIAKELNYDREVVRVWFCNRRQTLKNTS) is a DNA-binding region (homeobox).

The protein belongs to the POU transcription factor family. Class-6 subfamily. In terms of tissue distribution, in the embryo, widely expressed, with highest levels in the developing brain and spinal cord. In the adult, mostly found in the brain, where it is diffusely expressed with the exception of an enrichment in layer IV of the neocortex. Also found in kidney, lung, heart, adrenal, skin, and placenta. Low levels in spleen, muscle, liver, anterior pituitary, testis and ovary.

The protein resides in the nucleus. Its function is as follows. Transcription factor that binds preferentially to a variant of the octamer motif (5'-ATGATAAT-3'). This Rattus norvegicus (Rat) protein is POU domain, class 6, transcription factor 1 (Pou6f1).